We begin with the raw amino-acid sequence, 311 residues long: Cell division protein ZipA (311 aa).

At 1-5 (MQELR) the chain is on the periplasmic side. Residues 6-26 (FVLIVVGALAIMALLFHGLWT) traverse the membrane as a helical segment. The Cytoplasmic segment spans residues 27 to 311 (SKKEGKAKFG…QIVEFKAANA (285 aa)). Basic and acidic residues predominate over residues 32–54 (KAKFGDKPLSKLDLGESEPKESE). Residues 32-60 (KAKFGDKPLSKLDLGESEPKESEMYVAPE) form a disordered region.

It belongs to the ZipA family. Interacts with FtsZ via their C-terminal domains.

The protein localises to the cell inner membrane. In terms of biological role, essential cell division protein that stabilizes the FtsZ protofilaments by cross-linking them and that serves as a cytoplasmic membrane anchor for the Z ring. Also required for the recruitment to the septal ring of downstream cell division proteins. This Vibrio vulnificus (strain YJ016) protein is Cell division protein ZipA.